The following is a 542-amino-acid chain: MADRAPPPPPPPAGIDSRSGFCAATRIFHSTRAPGDLPPESLPMTAAAYAFSLLSSSTLPGRPALVDAATGIAISYPSFLAAVRSLAGGLWCSLGLRPGDVALVVAPSRLEVPVLDFALMSIGAVVSPANPVSTPEEYAHQVALSRPVVAFAAPEVAAKLPEHVRCVVIGSDEYGRLAASDGRRAAAPAAVAVKQSDTAAVLYSSGTTGRVKAVAITHRNLIALMSLHADNREKVAREAAEAGEEPPPPAVTLLPIPLFHVFGFMMVLRSVSMGETSVLMERFDFIAALRAIERYRVTLLPAAPPVLVAMVKYEEARRRDLSSLLVIGIGGAPLGREVAEQFASVFPNVELVQGYGLTESSGAVAATVGPEESKAYGSVGKLGSHLQAKIVDPSTGYVGDDEATAATVDSEGWLKTGDLCYFNEDGFLYIVDRLKELIKYKGYQVPPAELEHILQSHPGIADAAVIPYPDEEAGELPMAFIVRQPGSNITKEQVMDYVAKQVAPYKKVRRVAFVTAIPKSPAGKILRRELVQQALSMGASKL.

ATP contacts are provided by S204, S205, G206, T207, T208, and K212. (E)-4-coumaroyl-AMP is bound at residue F262. R282 provides a ligand contact to CoA. An SBD1 region spans residues D284–Q353. 4 residues coordinate (E)-4-coumaroyl-AMP: G331, Q353, G354, and T358. ATP-binding residues include Q353, G354, T358, D418, and R433. Residues G354–Y397 are SBD2. The (E)-4-coumaroyl-AMP site is built by K435 and K439. K441 and G442 together coordinate CoA. Position 524 (K524) interacts with ATP.

Belongs to the ATP-dependent AMP-binding enzyme family. Mg(2+) serves as cofactor.

It catalyses the reaction (E)-4-coumarate + ATP + CoA = (E)-4-coumaroyl-CoA + AMP + diphosphate. The enzyme catalyses (E)-4-coumarate + ATP + H(+) = (E)-4-coumaroyl-AMP + diphosphate. The catalysed reaction is (E)-4-coumaroyl-AMP + CoA = (E)-4-coumaroyl-CoA + AMP + H(+). In terms of biological role, carboxylate--CoA ligase that may use 4-coumarate as substrate. Follows a two-step reaction mechanism, wherein the carboxylate substrate first undergoes adenylation by ATP, followed by a thioesterification in the presence of CoA to yield the final CoA thioester. The chain is 4-coumarate--CoA ligase-like 5 (4CLL5) from Oryza sativa subsp. japonica (Rice).